A 95-amino-acid polypeptide reads, in one-letter code: Large ribosomal subunit protein uL23cz/uL23cy (95 aa).

It belongs to the universal ribosomal protein uL23 family. In terms of assembly, part of the 50S ribosomal subunit.

Its subcellular location is the plastid. The protein resides in the chloroplast. In terms of biological role, binds to 23S rRNA. The chain is Large ribosomal subunit protein uL23cz/uL23cy (rpl23-A) from Amborella trichopoda.